A 299-amino-acid polypeptide reads, in one-letter code: tRNA dimethylallyltransferase 2 (299 aa).

ATP is bound at residue 9–16; the sequence is GPTGVGKT. Position 11–16 (11–16) interacts with substrate; it reads TGVGKT. An interaction with substrate tRNA region spans residues 34 to 37; sequence DSRQ.

It belongs to the IPP transferase family. As to quaternary structure, monomer. Mg(2+) serves as cofactor.

The catalysed reaction is adenosine(37) in tRNA + dimethylallyl diphosphate = N(6)-dimethylallyladenosine(37) in tRNA + diphosphate. Its function is as follows. Catalyzes the transfer of a dimethylallyl group onto the adenine at position 37 in tRNAs that read codons beginning with uridine, leading to the formation of N6-(dimethylallyl)adenosine (i(6)A). The chain is tRNA dimethylallyltransferase 2 from Parabacteroides distasonis (strain ATCC 8503 / DSM 20701 / CIP 104284 / JCM 5825 / NCTC 11152).